A 341-amino-acid chain; its full sequence is Transcription factor JunD (341 aa).

The interval 21 to 49 (VAGAAGAPGGGGFAPPGRAFPGAPPTSSM) is disordered. The short motif at 35 to 47 (PPGRAFPGAPPTS) is the Menin-binding motif (MBM) element. The MAP kinase docking motif; essential for its phosphorylation motif lies at 51-60 (KKDALTLSLA). The segment at 65 to 85 (AGLKPGSATAPSALRPDGAPD) is disordered. A Phosphoserine modification is found at S90. S100 bears the Phosphoserine; by MAPK8 mark. At T117 the chain carries Phosphothreonine. The disordered stretch occupies residues 155–176 (AATAATSGAPAPPAPADLAATP). A phosphoserine mark is found at S245, S249, and S253. The tract at residues 262 to 289 (RIKAERKRLRNRIAASKCRKRKLERISR) is basic motif. One can recognise a bZIP domain in the interval 262-325 (RIKAERKRLR…AQLKQKVLSH (64 aa)). The tract at residues 290 to 318 (LEEKVKTLKSQNTELASTASLLREQVAQL) is leucine-zipper.

This sequence belongs to the bZIP family. Jun subfamily. In terms of assembly, heterodimer; binds DNA as a heterodimer. Component of an AP-1 transcription factor complex composed of JUN-FOS heterodimers. As part of the AP-1 transcription factor complex, forms heterodimers with FOS proteins, thereby binding to the AP-1 consensus sequence and stimulating transcription. Forms heterodimers with FOSB; thereby binding to the AP-1 consensus sequence. Interacts (via MBM motif) with MEN1; this interaction represses transcriptional activation. Interacts with MAPK10; this interaction is inhibited in the presence of MEN1. In terms of processing, phosphorylated by MAP kinases MAPK8 and MAPK10; phosphorylation is inhibited in the presence of MEN1.

It is found in the nucleus. In terms of biological role, transcription factor binding AP-1 sites. Heterodimerizes with proteins of the FOS family to form an AP-1 transcription factor complex, thereby enhancing their DNA binding activity to an AP-1 consensus sequence 3'-TGA[GC]TCA-5' and enhancing their transcriptional activity. This is Transcription factor JunD (Jund) from Rattus norvegicus (Rat).